A 304-amino-acid chain; its full sequence is CD-NTase-associated protein 6 (304 aa).

75 to 80 (GTGKTS) contributes to the ATP binding site.

The protein belongs to the AAA ATPase family. In terms of assembly, oligomerizes. Homohexamer. Forms a 1:1:6 CdnD:Cap7:Cap6 complex.

Functionally, regulates complex assembly in a CBASS antivirus system. CBASS (cyclic oligonucleotide-based antiphage signaling system) provides immunity against bacteriophage. The CD-NTase protein synthesizes cyclic nucleotides in response to infection; these serve as specific second messenger signals. The signals activate a diverse range of effectors, leading to bacterial cell death and thus abortive phage infection. A type III-C(AAA) CBASS system. Its function is as follows. Prevents the CdnD:Cap7:Cap8 complex (also called CdnD:HORMA2:HORMA3) from synthesizing 2',3',3'-cyclic AMP-AMP-AMP (cAAA). Binds and disassembles an active CdnD:Cap7:Cap8 complex, inhibiting the complex's ability to synthesize cyclic nucleotide second messengers. An AAA+-ATPase remodeler, in the absence of foreign threat Cap6 probably maintains the Cap7 protein in an open, inactive state. Once activated (presumably by a bacteriophage protein) Cap7 binds to and activates its cognate CD-NTase (CdnD in this bacteria) to synthesize cAAA, a cyclic nucleotide second messenger. cAAA activates the NucC endonuclease which degrades all DNA in the infected cell, causing cell death and abortive phage infection. The protein is CD-NTase-associated protein 6 of Pseudomonas aeruginosa.